The following is a 711-amino-acid chain: Ribosomal RNA large subunit methyltransferase K/L (711 aa).

The THUMP domain occupies 42–153 (DAQRAVLWSR…KGRATISVDL (112 aa)).

It belongs to the methyltransferase superfamily. RlmKL family.

The protein resides in the cytoplasm. The catalysed reaction is guanosine(2445) in 23S rRNA + S-adenosyl-L-methionine = N(2)-methylguanosine(2445) in 23S rRNA + S-adenosyl-L-homocysteine + H(+). The enzyme catalyses guanosine(2069) in 23S rRNA + S-adenosyl-L-methionine = N(2)-methylguanosine(2069) in 23S rRNA + S-adenosyl-L-homocysteine + H(+). In terms of biological role, specifically methylates the guanine in position 2445 (m2G2445) and the guanine in position 2069 (m7G2069) of 23S rRNA. This Xanthomonas campestris pv. campestris (strain 8004) protein is Ribosomal RNA large subunit methyltransferase K/L.